The primary structure comprises 392 residues: uncharacterized protein (392 aa).

Belongs to the peptidase M24 family.

This is an uncharacterized protein from Sinorhizobium fredii (strain NBRC 101917 / NGR234).